The sequence spans 347 residues: MIKLSKKYCLGISFVLYILLSVCEGHKNLTCDFNDVYKLEFHPNQQTSVTKLCNVTPNVLEKVTIKCGSDKLNYNLYPPTCFEEVYASRNMMHLKKIKEFVIGSSMFMRRSLTPNKINEVSFRIPPNMMPEKPIYCFCENKKTITINGSNGNPSSKKDIINRGIVEIIIPSLNEKVKGCDFTTSESTIFSKGYSINEISNKSSNNQQDIVCTVKAHANDLIGFKCPSNYSVEPHDCFVSAFNLSGKNENLENKLKLTNIIMDHYNNTFYSRLPSLISDNWKFFCVCSKDNEKKLVFTVEASISSSNTKLASRYNTYQDYISNSSFLTLSSYCAFITFIITSFLSFIL.

A signal peptide (or 25) is located at residues 1-23 (MIKLSKKYCLGISFVLYILLSVC). 6-Cys domains follow at residues 27–172 (KNLT…IPSL) and 175–305 (KVKG…ISSS). A glycan (N-linked (GlcNAc...) asparagine) is linked at asparagine 28. Intrachain disulfides connect cysteine 31/cysteine 53, cysteine 67/cysteine 138, and cysteine 81/cysteine 136. N-linked (GlcNAc...) asparagine glycosylation is found at asparagine 147, asparagine 200, asparagine 228, asparagine 242, asparagine 265, and asparagine 322. 3 disulfide bridges follow: cysteine 179–cysteine 211, cysteine 225–cysteine 286, and cysteine 236–cysteine 284. Residue asparagine 322 is the site of GPI-anchor amidated asparagine attachment. Residues 323–347 (SSFLTLSSYCAFITFIITSFLSFIL) constitute a propeptide, removed in mature form.

Heterodimer; heterodimerizes with PF41. May form an antiparallel heterodimer with PF41.

It localises to the cell surface. The protein resides in the cell membrane. This is Merozoite surface protein P12 (PF12) from Plasmodium falciparum.